The primary structure comprises 72 residues: Disintegrin crotatroxin (72 aa).

Residues 1 to 72 (AGEECDCGSP…ADCPRNGLYG (72 aa)) form the Disintegrin domain. 6 cysteine pairs are disulfide-bonded: Cys5–Cys20, Cys7–Cys15, Cys14–Cys37, Cys28–Cys34, Cys33–Cys58, and Cys46–Cys65. The Cell attachment site signature appears at 50 to 52 (RGD).

It belongs to the venom metalloproteinase (M12B) family. P-II subfamily. P-IIa sub-subfamily. Monomer. Expressed by the venom gland.

The protein resides in the secreted. In terms of biological role, inhibits fibrinogen interaction with platelets. Acts by binding to the alpha-IIb/beta-3 (ITGA2B/ITGB3) on the platelet surface and inhibits aggregation induced by ADP, thrombin, platelet-activating factor and collagen. Its function is as follows. Inhibits ADP-induced platelet aggregation (IC(50) = 17.5nM), cancer cell migration in vitro, and experimental lung tumor colonization of cancer cells. In Crotalus atrox (Western diamondback rattlesnake), this protein is Disintegrin crotatroxin.